We begin with the raw amino-acid sequence, 500 residues long: POU domain, class 3, transcription factor 3 (500 aa).

A compositionally biased stretch (gly residues) spans 32-52 (GGGGGGGGGGGGAGGGGGGMQ). 4 disordered regions span residues 32 to 63 (GGGGGGGGGGGGAGGGGGGMQPGSAAVTSGAY), 122 to 190 (WSGS…WGAA), 231 to 319 (NGML…TPTS), and 461 to 500 (EKRMTPPGIQQQTPDDVYSQVGTVSADTPPPHHGLQTSVQ). Pro residues-rich tracts occupy residues 134-146 (QQPPQPPPPPPQG) and 171-181 (HLGPPPPPPHQ). Residues 241–251 (GGGGGGAGGGA) show a composition bias toward gly residues. A compositionally biased stretch (basic residues) spans 270-287 (HHHHHHHHAHPHPPHPHH). The span at 293 to 303 (HHGGGGGGAGP) shows a compositional bias: gly residues. The POU-specific domain maps to 314–388 (EDTPTSDDLE…LLNKWLEEAD (75 aa)). Residues 406–465 (KRKKRTSIEVSVKGALESHFLKCPKPSAQEITNLADSLQLEKEVVRVWFCNRRQKEKRMT) constitute a DNA-binding region (homeobox). A compositionally biased stretch (polar residues) spans 468-486 (GIQQQTPDDVYSQVGTVSA).

Belongs to the POU transcription factor family. Class-3 subfamily. Homodimer. Brain.

It is found in the nucleus. Functionally, transcription factor that acts synergistically with SOX11 and SOX4. Plays a role in neuronal development. Is implicated in an enhancer activity at the embryonic met-mesencephalic junction; the enhancer element contains the octamer motif (5'-ATTTGCAT-3'). The sequence is that of POU domain, class 3, transcription factor 3 from Homo sapiens (Human).